Here is a 57-residue protein sequence, read N- to C-terminus: Small ribosomal subunit protein bS21 (57 aa).

The span at Val-32–Ser-42 shows a compositional bias: basic and acidic residues. The tract at residues Val-32–Arg-57 is disordered. Positions Gln-43 to Arg-57 are enriched in basic residues.

This sequence belongs to the bacterial ribosomal protein bS21 family.

This Synechococcus elongatus (strain ATCC 33912 / PCC 7942 / FACHB-805) (Anacystis nidulans R2) protein is Small ribosomal subunit protein bS21.